Consider the following 691-residue polypeptide: Elongation factor G (691 aa).

The tr-type G domain occupies 8–283; that stretch reads KRVRNIGIAA…AVVAYLPAPD (276 aa). Residues 17-24, 81-85, and 135-138 contribute to the GTP site; these read AHIDAGKT, DTPGH, and NKMD.

This sequence belongs to the TRAFAC class translation factor GTPase superfamily. Classic translation factor GTPase family. EF-G/EF-2 subfamily.

It is found in the cytoplasm. Its function is as follows. Catalyzes the GTP-dependent ribosomal translocation step during translation elongation. During this step, the ribosome changes from the pre-translocational (PRE) to the post-translocational (POST) state as the newly formed A-site-bound peptidyl-tRNA and P-site-bound deacylated tRNA move to the P and E sites, respectively. Catalyzes the coordinated movement of the two tRNA molecules, the mRNA and conformational changes in the ribosome. In Campylobacter lari (strain RM2100 / D67 / ATCC BAA-1060), this protein is Elongation factor G.